The chain runs to 739 residues: Trehalose phosphorylase (739 aa).

A propeptide spanning residues 1 to 26 (MSTPHHQFESKSSTAIRRRLSSSVSS) is cleaved from the precursor. The segment at 1–28 (MSTPHHQFESKSSTAIRRRLSSSVSSKQ) is disordered.

This sequence belongs to the glycosyltransferase group 1 family. Glycosyltransferase 4 subfamily. In terms of assembly, homodimer.

The enzyme catalyses alpha,alpha-trehalose + phosphate = alpha-D-glucose + alpha-D-glucose 1-phosphate. Functionally, reversibly catalyzes the synthesis and degradation of trehalose from glucose and alpha-D-glucose 1-phosphate. The equilibrium lies in the direction of trehalose synthesis. The sequence is that of Trehalose phosphorylase from Pleurotus pulmonarius (Indian oyster mushroom).